The primary structure comprises 288 residues: Shikimate dehydrogenase (NADP(+)) (288 aa).

Residues 18-20 and T65 contribute to the shikimate site; that span reads SRS. K69 acts as the Proton acceptor in catalysis. E81 is a binding site for NADP(+). Shikimate-binding residues include N90 and D106. NADP(+) contacts are provided by residues 131 to 135, 155 to 160, and M223; these read GAGGA and NRTLAK. Residue Y225 coordinates shikimate. G246 contributes to the NADP(+) binding site.

This sequence belongs to the shikimate dehydrogenase family. In terms of assembly, homodimer.

The catalysed reaction is shikimate + NADP(+) = 3-dehydroshikimate + NADPH + H(+). It participates in metabolic intermediate biosynthesis; chorismate biosynthesis; chorismate from D-erythrose 4-phosphate and phosphoenolpyruvate: step 4/7. Involved in the biosynthesis of the chorismate, which leads to the biosynthesis of aromatic amino acids. Catalyzes the reversible NADPH linked reduction of 3-dehydroshikimate (DHSA) to yield shikimate (SA). This is Shikimate dehydrogenase (NADP(+)) from Verminephrobacter eiseniae (strain EF01-2).